We begin with the raw amino-acid sequence, 998 residues long: Sensor histidine kinase AruS (998 aa).

Disordered stretches follow at residues 27 to 82 (ERRP…HARA), 154 to 198 (RQAG…LPAG), and 224 to 245 (RQHPALAGRQRARLSAPRRQPR). A compositionally biased stretch (low complexity) spans 40–49 (GEAAVRRAGL). Residues 161-183 (HRLHRPRTTHRHAVRRAPGRRRE) show a composition bias toward basic residues. The next 2 helical transmembrane spans lie at 264-284 (VLLFSLCFTVLAGAVQLFFEY) and 395-415 (ASLLWMGSFLCGLAVALSWLF). The region spanning 417–473 (SLVTRHLWRMSEFAGHIAEGDLQQPLRLDKVDRERDEIDAVAAALEDMRQALRTDRR) is the HAMP domain. In terms of domain architecture, Histidine kinase spans 513 to 734 (TMSHEIRTPL…TFWFEIELAL (222 aa)). H516 carries the phosphohistidine; by autocatalysis modification. The Response regulatory domain occupies 751–869 (EVLLVEDVAL…ELRRALGEVG (119 aa)). 4-aspartylphosphate is present on D800. An HPt domain is found at 894-987 (GRHKLAGLLG…RDGAEALRRA (94 aa)). H933 bears the Phosphohistidine mark.

Autophosphorylated. Activation may require a sequential transfer of a phosphate group from a His in the primary transmitter domain, to an Asp in the receiver domain and to a His in the secondary transmitter domain.

The protein localises to the cell membrane. It carries out the reaction ATP + protein L-histidine = ADP + protein N-phospho-L-histidine.. It participates in amino-acid degradation; L-arginine degradation [regulation]. Functionally, member of the two-component regulatory system AruS/AruR, which is involved in the regulation of the arginine transaminase (ATA) pathway in response to exogeneous L-arginine. Probably functions as a sensor kinase that phosphorylates AruR. The sequence is that of Sensor histidine kinase AruS (aruS) from Pseudomonas aeruginosa (strain ATCC 15692 / DSM 22644 / CIP 104116 / JCM 14847 / LMG 12228 / 1C / PRS 101 / PAO1).